A 146-amino-acid polypeptide reads, in one-letter code: Ribonuclease H (146 aa).

One can recognise an RNase H type-1 domain in the interval 1 to 143; sequence MQKKVTIYTD…CDYLATQAIK (143 aa). Residues aspartate 10, glutamate 48, aspartate 70, and aspartate 135 each coordinate Mg(2+).

The protein belongs to the RNase H family. As to quaternary structure, monomer. The cofactor is Mg(2+).

It localises to the cytoplasm. The enzyme catalyses Endonucleolytic cleavage to 5'-phosphomonoester.. Its function is as follows. Endonuclease that specifically degrades the RNA of RNA-DNA hybrids. The sequence is that of Ribonuclease H from Chlorobium phaeobacteroides (strain BS1).